Consider the following 81-residue polypeptide: MSNLLAIGIAALIVALIITIVVWTIAYIEYKKLVRQRKINRLYKRISERAEDSGNESEGDAEELAALGEVGPFIPGDINNL.

Residues 1–7 (MSNLLAI) lie on the Extracellular side of the membrane. A helical membrane pass occupies residues 8–28 (GIAALIVALIITIVVWTIAYI). Residues 29–81 (EYKKLVRQRKINRLYKRISERAEDSGNESEGDAEELAALGEVGPFIPGDINNL) lie on the Cytoplasmic side of the membrane. Phosphoserine; by host CK2 is present on residues S53 and S57.

It belongs to the HIV-1 VPU protein family. In terms of assembly, homopentamer. Interacts with host CD4 and BRTC; these interactions induce proteasomal degradation of CD4. Interacts with host BST2; this interaction leads to the degradation of host BST2. Interacts with host FBXW11. Interacts with host AP1M1; this interaction plays a role in the mistrafficking and subsequent degradation of host BST2. Interacts with host RANBP2; this interaction allows Vpu to down-regulate host BLM sumoylation. Phosphorylated by host CK2. This phosphorylation is necessary for interaction with human BTRC and degradation of CD4.

The protein localises to the host membrane. Its activity is regulated as follows. Ion channel activity is inhibited by hexamethylene amiloride in vitro. Enhances virion budding by targeting host CD4 and Tetherin/BST2 to proteasome degradation. Degradation of CD4 prevents any unwanted premature interactions between viral Env and its host receptor CD4 in the endoplasmic reticulum. Degradation of antiretroviral protein Tetherin/BST2 is important for virion budding, as BST2 tethers new viral particles to the host cell membrane. Mechanistically, Vpu bridges either CD4 or BST2 to BTRC, a substrate recognition subunit of the Skp1/Cullin/F-box protein E3 ubiquitin ligase, induces their ubiquitination and subsequent proteasomal degradation. The alteration of the E3 ligase specificity by Vpu seems to promote the degradation of host IKBKB, leading to NF-kappa-B down-regulation and subsequent apoptosis. Acts as a viroporin that forms an oligomeric ion channel in membranes. Modulates the host DNA repair mechanisms to promote degradation of nuclear viral cDNA in cells that are already productively infected in order to suppress immune sensing and proviral hyper-integration (superinfection). Manipulates PML-NBs and modulates SUMOylation of host BLM protein thereby enhancing its DNA-end processing activity toward viral unintegrated linear DNA. Also inhibits RAD52-mediated homologous repair of viral cDNA, preventing the generation of dead-end circular forms of single copies of the long terminal repeat and permitting sustained nucleolytic attack. The chain is Protein Vpu from Homo sapiens (Human).